Reading from the N-terminus, the 189-residue chain is Elongation factor P (189 aa).

The protein belongs to the elongation factor P family.

It is found in the cytoplasm. It participates in protein biosynthesis; polypeptide chain elongation. Involved in peptide bond synthesis. Stimulates efficient translation and peptide-bond synthesis on native or reconstituted 70S ribosomes in vitro. Probably functions indirectly by altering the affinity of the ribosome for aminoacyl-tRNA, thus increasing their reactivity as acceptors for peptidyl transferase. In Rhizobium meliloti (strain 1021) (Ensifer meliloti), this protein is Elongation factor P.